Consider the following 320-residue polypeptide: Malate dehydrogenase (320 aa).

Residues Gly-10–Gly-15 and Asp-34 contribute to the NAD(+) site. Substrate contacts are provided by Arg-83 and Arg-89. Residues Asn-96 and Ile-119 to Asn-121 contribute to the NAD(+) site. Asn-121 and Arg-152 together coordinate substrate. Residue His-176 is the Proton acceptor of the active site.

It belongs to the LDH/MDH superfamily. MDH type 3 family.

The enzyme catalyses (S)-malate + NAD(+) = oxaloacetate + NADH + H(+). In terms of biological role, catalyzes the reversible oxidation of malate to oxaloacetate. The protein is Malate dehydrogenase of Ruegeria pomeroyi (strain ATCC 700808 / DSM 15171 / DSS-3) (Silicibacter pomeroyi).